An 847-amino-acid chain; its full sequence is Cancer-associated gene 1 protein homolog (847 aa).

Positions Glu118 to Glu161 are disordered. The stretch at Asn377 to Thr567 forms a coiled coil.

The chain is Cancer-associated gene 1 protein homolog (Cage1) from Rattus norvegicus (Rat).